Here is a 713-residue protein sequence, read N- to C-terminus: Probable arginine--tRNA ligase, cytoplasmic (713 aa).

Positions 74-113 (KNKKNGVKATSTSSPSSSTSAPAEKKAKKDGKTGGAPPKQ) are disordered. Residues 81-95 (KATSTSSPSSSTSAP) are compositionally biased toward low complexity. Residues 96-105 (AEKKAKKDGK) are compositionally biased toward basic and acidic residues. L-arginine-binding positions include 252–254 (SPN), His-263, Tyr-438, Asp-442, and Gln-466. Positions 252 to 263 (SPNIAKEMHVGH) match the 'HIGH' region motif. The interaction with tRNA stretch occupies residues 583 to 597 (NTAVYLLYAYTRIQS).

Belongs to the class-I aminoacyl-tRNA synthetase family.

It is found in the cytoplasm. The protein localises to the cytosol. The enzyme catalyses tRNA(Arg) + L-arginine + ATP = L-arginyl-tRNA(Arg) + AMP + diphosphate. Forms part of a macromolecular complex that catalyzes the attachment of specific amino acids to cognate tRNAs during protein synthesis. This is Probable arginine--tRNA ligase, cytoplasmic from Caenorhabditis elegans.